A 173-amino-acid chain; its full sequence is Co-chaperone protein HscB homolog (173 aa).

Residues 5-77 (CHYALFDLQP…PRRARYLLAI (73 aa)) enclose the J domain.

This sequence belongs to the HscB family. As to quaternary structure, interacts with HscA and stimulates its ATPase activity.

Co-chaperone involved in the maturation of iron-sulfur cluster-containing proteins. Seems to help targeting proteins to be folded toward HscA. The polypeptide is Co-chaperone protein HscB homolog (Pseudomonas putida (strain GB-1)).